The chain runs to 251 residues: Triosephosphate isomerase (251 aa).

Residue Asn9–Lys11 participates in substrate binding. Residue His95 is the Electrophile of the active site. Glu167 acts as the Proton acceptor in catalysis. Residues Gly173, Ser213, and Gly234–Gly235 each bind substrate.

This sequence belongs to the triosephosphate isomerase family. Homodimer.

The protein resides in the cytoplasm. It catalyses the reaction D-glyceraldehyde 3-phosphate = dihydroxyacetone phosphate. Its pathway is carbohydrate biosynthesis; gluconeogenesis. It participates in carbohydrate degradation; glycolysis; D-glyceraldehyde 3-phosphate from glycerone phosphate: step 1/1. In terms of biological role, involved in the gluconeogenesis. Catalyzes stereospecifically the conversion of dihydroxyacetone phosphate (DHAP) to D-glyceraldehyde-3-phosphate (G3P). The polypeptide is Triosephosphate isomerase (Lactobacillus gasseri (strain ATCC 33323 / DSM 20243 / BCRC 14619 / CIP 102991 / JCM 1131 / KCTC 3163 / NCIMB 11718 / NCTC 13722 / AM63)).